The chain runs to 137 residues: Large ribosomal subunit protein uL22c (137 aa).

Belongs to the universal ribosomal protein uL22 family. As to quaternary structure, part of the 50S ribosomal subunit.

It is found in the plastid. It localises to the chloroplast. In terms of biological role, this protein binds specifically to 23S rRNA. Functionally, the globular domain of the protein is located near the polypeptide exit tunnel on the outside of the subunit, while an extended beta-hairpin is found that lines the wall of the exit tunnel in the center of the 70S ribosome. This Oenothera argillicola (Appalachian evening primrose) protein is Large ribosomal subunit protein uL22c (rpl22).